Reading from the N-terminus, the 119-residue chain is Basic phospholipase A2 notexin (119 aa).

7 disulfides stabilise this stretch: Cys11–Cys71, Cys27–Cys118, Cys29–Cys45, Cys44–Cys99, Cys51–Cys92, Cys60–Cys85, and Cys78–Cys90. Ca(2+)-binding residues include Tyr28, Gly30, and Gly32. Residue His48 is part of the active site. Residue Asp49 coordinates Ca(2+). Asp93 is an active-site residue.

It belongs to the phospholipase A2 family. Group I subfamily. D49 sub-subfamily. In terms of assembly, monomer. Ca(2+) is required as a cofactor. Expressed by the venom gland.

Its subcellular location is the secreted. It catalyses the reaction a 1,2-diacyl-sn-glycero-3-phosphocholine + H2O = a 1-acyl-sn-glycero-3-phosphocholine + a fatty acid + H(+). Its function is as follows. Snake venom phospholipase A2 (PLA2) that inhibits neuromuscular transmission by blocking acetylcholine release from the nerve termini. Is directly toxic to skeletal muscle upon local application in vivo (dystrophic effect). Also has direct nephrotoxicity in experimental mice; a single subcutaneous dose (1.38 ug/kg) produces renal tubular and glomerular damage within 24 hours. PLA2 catalyzes the calcium-dependent hydrolysis of the 2-acyl groups in 3-sn-phosphoglycerides. The chain is Basic phospholipase A2 notexin from Notechis scutatus scutatus (Mainland tiger snake).